The following is a 436-amino-acid chain: D-amino acid dehydrogenase (436 aa).

3-17 (IVVLGAGVVGVTSAY) provides a ligand contact to FAD.

Belongs to the DadA oxidoreductase family. It depends on FAD as a cofactor.

It catalyses the reaction a D-alpha-amino acid + A + H2O = a 2-oxocarboxylate + AH2 + NH4(+). The protein operates within amino-acid degradation; D-alanine degradation; NH(3) and pyruvate from D-alanine: step 1/1. In terms of biological role, oxidative deamination of D-amino acids. The polypeptide is D-amino acid dehydrogenase (Cereibacter sphaeroides (strain ATCC 17023 / DSM 158 / JCM 6121 / CCUG 31486 / LMG 2827 / NBRC 12203 / NCIMB 8253 / ATH 2.4.1.) (Rhodobacter sphaeroides)).